We begin with the raw amino-acid sequence, 2531 residues long: Talin (2531 aa).

Positions 87–401 (RPLRVRMMDE…GYIDIILKKK (315 aa)) constitute an FERM domain. The tract at residues 598-621 (GEKLLEAARGLAGAVRHLLKSAEP) is interaction with VIN1. In terms of domain architecture, I/LWEQ spans 2287–2526 (TDWVDPSDPN…KIRHDKYKRH (240 aa)). Positions 2466-2485 (AAKRSSEEGDDEEVSGGGQE) are disordered.

Interacts with VIN1 (vinculin); the interaction facilitates VIN1 binding to F-actin.

Its subcellular location is the cytoplasm. The protein resides in the cytoskeleton. It is found in the cell cortex. In terms of biological role, probably involved in connections of major cytoskeletal structures to the plasma membrane. This is Talin from Oscarella pearsei (Sponge).